A 380-amino-acid polypeptide reads, in one-letter code: MAFVCLAIGCLYTFLISTTFGCTSSSDTEIKVNPPQDFEIVDPGYLGYLYLQWQPPLSLDHFKECTVEYELKYRNIGSETWKTIITKNLHYKDGFDLNKGIEAKIHTLLPWQCTNGSEVQSSWAETTYWISPQGIPETKVQDMDCVYYNWQYLLCSWKPGIGVLLDTNYNLFYWYEGLDHALQCVDYIKADGQNIGCRFPYLEASDYKDFYICVNGSSENKPIRSSYFTFQLQNIVKPLPPVYLTFTRESSCEIKLKWSIPLGPIPARCFDYEIEIREDDTTLVTATVENETYTLKTTNETRQLCFVVRSKVNIYCSDDGIWSEWSDKQCWEGEDLSKKTLLRFWLPFGFILILVIFVTGLLLRKPNTYPKMIPEFFCDT.

An N-terminal signal peptide occupies residues 1-26 (MAFVCLAIGCLYTFLISTTFGCTSSS). The Extracellular segment spans residues 27 to 343 (DTEIKVNPPQ…EDLSKKTLLR (317 aa)). 3 consecutive Fibronectin type-III domains span residues 34–134 (PPQD…SPQG), 139–235 (KVQD…LQNI), and 240–333 (PPVY…CWEG). C65 and C113 are disulfide-bonded. An N-linked (GlcNAc...) asparagine glycan is attached at N115. 2 cysteine pairs are disulfide-bonded: C145–C155 and C184–C197. N-linked (GlcNAc...) asparagine glycans are attached at residues N215, N290, and N299. C269 and C316 are disulfide-bonded. The WSXWS motif motif lies at 322 to 326 (WSEWS). A helical membrane pass occupies residues 344–363 (FWLPFGFILILVIFVTGLLL). Over 364–380 (RKPNTYPKMIPEFFCDT) the chain is Cytoplasmic.

The protein belongs to the type I cytokine receptor family. Type 5 subfamily. As to quaternary structure, interacts with IL4RA. Interacts with high affinity to interleukin-13 (IL13), but not to interleukin-4 (IL4). Cleaved by MMP8 leading to a soluble form that is also able to interact with IL13.

The protein resides in the cell membrane. In terms of biological role, cell surface receptor that plays a role in the regulation of IL-13-mediated responses. Functions as a decoy receptor that inhibits IL-13- and IL-4-mediated signal transduction via the JAK-STAT pathway and thereby modulates immune responses and inflammation. Serves as a functional signaling receptor for IL-13 in an alternative pathway involving AP-1 ultimately leading to the production of TGFB1. This Homo sapiens (Human) protein is Interleukin-13 receptor subunit alpha-2 (IL13RA2).